The primary structure comprises 169 residues: MTALNVLIYPDDHLKVVCEPVTKVNDAIRKIVDDMFDTMYQEKGIGLAAPQVDILQRIITIDVEGDKQNQFVLINPEILASEGETGIEEGCLSIPGFRALVPRKEKVTVRALDRDGKEFTLDADGLLAICIQHEIDHLNGILFVDYLSPLKRQRIKEKLIKYKKQIAKS.

Residues cysteine 91 and histidine 133 each contribute to the Fe cation site. Residue glutamate 134 is part of the active site. Histidine 137 lines the Fe cation pocket.

This sequence belongs to the polypeptide deformylase family. The cofactor is Fe(2+).

It carries out the reaction N-terminal N-formyl-L-methionyl-[peptide] + H2O = N-terminal L-methionyl-[peptide] + formate. Functionally, removes the formyl group from the N-terminal Met of newly synthesized proteins. Requires at least a dipeptide for an efficient rate of reaction. N-terminal L-methionine is a prerequisite for activity but the enzyme has broad specificity at other positions. This Haemophilus influenzae (strain ATCC 51907 / DSM 11121 / KW20 / Rd) protein is Peptide deformylase.